An 825-amino-acid chain; its full sequence is Beta-glucosidase (825 aa).

Positions 1-20 are cleaved as a signal peptide; that stretch reads MLLPLYGLASFLVLSQAALV. Asparagine 21, asparagine 74, asparagine 97, asparagine 230, and asparagine 271 each carry an N-linked (GlcNAc...) asparagine glycan. Aspartate 299 is a catalytic residue. N-linked (GlcNAc...) asparagine glycosylation is found at asparagine 328, asparagine 335, asparagine 537, asparagine 550, asparagine 556, asparagine 578, asparagine 667, asparagine 690, asparagine 718, asparagine 733, and asparagine 761.

Belongs to the glycosyl hydrolase 3 family. In terms of assembly, homotetramer.

It carries out the reaction Hydrolysis of terminal, non-reducing beta-D-glucosyl residues with release of beta-D-glucose.. The protein operates within glycan metabolism; cellulose degradation. The chain is Beta-glucosidase from Wickerhamomyces anomalus (Yeast).